We begin with the raw amino-acid sequence, 734 residues long: Polyribonucleotide nucleotidyltransferase (734 aa).

Asp-497 and Asp-503 together coordinate Mg(2+). One can recognise a KH domain in the interval 564 to 623 (PRIIHITIDPDKIRDVIGPGGKVIKKIVEETGAEIDIEDDGRVFIAAVDQEKGRKAQEII). One can recognise an S1 motif domain in the interval 633 to 707 (GEIYTGRVTR…SQGRLKLSKK (75 aa)). Positions 700–734 (GRLKLSKKEATPPPESTAMKEGRAHRPSRRRESAR) are disordered. The span at 717–734 (AMKEGRAHRPSRRRESAR) shows a compositional bias: basic and acidic residues.

Belongs to the polyribonucleotide nucleotidyltransferase family. It depends on Mg(2+) as a cofactor.

It localises to the cytoplasm. The catalysed reaction is RNA(n+1) + phosphate = RNA(n) + a ribonucleoside 5'-diphosphate. Its function is as follows. Involved in mRNA degradation. Catalyzes the phosphorolysis of single-stranded polyribonucleotides processively in the 3'- to 5'-direction. The chain is Polyribonucleotide nucleotidyltransferase from Pelotomaculum thermopropionicum (strain DSM 13744 / JCM 10971 / SI).